Reading from the N-terminus, the 229-residue chain is Potassium/proton antiporter CemA (229 aa).

Transmembrane regions (helical) follow at residues 6–26 (AFIP…ISLC), 107–127 (ILHF…SFWG), and 189–209 (ILSG…KYWI).

This sequence belongs to the CemA family.

It localises to the plastid. Its subcellular location is the chloroplast inner membrane. The enzyme catalyses K(+)(in) + H(+)(out) = K(+)(out) + H(+)(in). In terms of biological role, contributes to K(+)/H(+) antiport activity by supporting proton efflux to control proton extrusion and homeostasis in chloroplasts in a light-dependent manner to modulate photosynthesis. Prevents excessive induction of non-photochemical quenching (NPQ) under continuous-light conditions. Indirectly promotes efficient inorganic carbon uptake into chloroplasts. The protein is Potassium/proton antiporter CemA of Barbarea verna (Land cress).